Here is a 225-residue protein sequence, read N- to C-terminus: Peptidyl-tRNA hydrolase (225 aa).

Residue Tyr-14 participates in tRNA binding. His-19 acts as the Proton acceptor in catalysis. Residues Phe-64, Asn-66, and Asn-112 each contribute to the tRNA site. The tract at residues 184–225 (ALRMQPPKPEKPKPAAKAPEAQAPEAAPDERSALQKLADRFR) is disordered. The segment covering 198-209 (AAKAPEAQAPEA) has biased composition (low complexity). Positions 211–225 (PDERSALQKLADRFR) are enriched in basic and acidic residues.

Belongs to the PTH family. In terms of assembly, monomer.

It localises to the cytoplasm. The catalysed reaction is an N-acyl-L-alpha-aminoacyl-tRNA + H2O = an N-acyl-L-amino acid + a tRNA + H(+). Functionally, hydrolyzes ribosome-free peptidyl-tRNAs (with 1 or more amino acids incorporated), which drop off the ribosome during protein synthesis, or as a result of ribosome stalling. In terms of biological role, catalyzes the release of premature peptidyl moieties from peptidyl-tRNA molecules trapped in stalled 50S ribosomal subunits, and thus maintains levels of free tRNAs and 50S ribosomes. This is Peptidyl-tRNA hydrolase from Cereibacter sphaeroides (strain ATCC 17023 / DSM 158 / JCM 6121 / CCUG 31486 / LMG 2827 / NBRC 12203 / NCIMB 8253 / ATH 2.4.1.) (Rhodobacter sphaeroides).